The primary structure comprises 514 residues: Putative fumarate hydratase class I (514 aa).

3 residues coordinate [4Fe-4S] cluster: Cys62, Cys187, and Cys274.

This sequence belongs to the class-I fumarase family. Homodimer. It depends on [4Fe-4S] cluster as a cofactor.

It catalyses the reaction (S)-malate = fumarate + H2O. It functions in the pathway carbohydrate metabolism; tricarboxylic acid cycle; (S)-malate from fumarate: step 1/1. Catalyzes the reversible hydration of fumarate to (S)-malate. The protein is Putative fumarate hydratase class I (fumA) of Geobacillus stearothermophilus (Bacillus stearothermophilus).